Reading from the N-terminus, the 76-residue chain is Conotoxin Cal5a L2 (76 aa).

The signal sequence occupies residues 1 to 22 (MRFYIGLMAALMLTSILRTDSA). Positions 23–42 (SVGQTGTKSELALIERVIRQ) are excised as a propeptide. The residue at position 50 (proline 50) is a 4-hydroxyproline. Residues proline 58, proline 62, and proline 64 each carry the 4-hydroxyproline; partial modification.

This sequence belongs to the conotoxin T superfamily. Contains 2 disulfide bonds that can be either 'C1-C3, C2-C4' or 'C1-C4, C2-C3', since these disulfide connectivities have been observed for conotoxins with cysteine framework V (for examples, see AC P0DQQ7 and AC P81755). Expressed by the venom duct.

The protein resides in the secreted. In terms of biological role, probable neurotoxin with unknown target. Possibly targets ion channels. In Californiconus californicus (California cone), this protein is Conotoxin Cal5a L2.